A 146-amino-acid chain; its full sequence is Large ribosomal subunit protein uL15 (146 aa).

Residues 1–13 (MKLHELKAAEGSR) show a composition bias toward basic and acidic residues. Residues 1 to 61 (MKLHELKAAE…GGQTPLFRRM (61 aa)) form a disordered region. Gly residues-rich tracts occupy residues 23–35 (TSSG…GRGQ) and 42–52 (SGGGVRLGFEG).

Belongs to the universal ribosomal protein uL15 family. As to quaternary structure, part of the 50S ribosomal subunit.

Functionally, binds to the 23S rRNA. This is Large ribosomal subunit protein uL15 from Streptococcus uberis (strain ATCC BAA-854 / 0140J).